We begin with the raw amino-acid sequence, 2169 residues long: Voltage-dependent L-type calcium channel subunit alpha-1C (2169 aa).

The Cytoplasmic segment spans residues 1–154 (MIRAFAQPST…RACISIVEWK (154 aa)). Residues 77-98 (GAALSWLAAIDAARQAKLMGSA) are calmodulin-binding. The tract at residues 104-128 (STVSSTQRKRQQYGKPKKQGGTTAT) is disordered. The segment covering 110-121 (QRKRQQYGKPKK) has biased composition (basic residues). The I repeat unit spans residues 141–438 (NPIRRACISI…LVLGVLSGEF (298 aa)). Residues 155–173 (PFEIIILLTIFANCVALAI) traverse the membrane as a helical segment. The Extracellular segment spans residues 174 to 188 (YIPFPEDDSNATNSN). A glycan (N-linked (GlcNAc...) asparagine) is linked at Asn-183. A helical membrane pass occupies residues 189 to 209 (LERVEYLFLIIFTVEAFLKVI). Topologically, residues 210 to 218 (AYGLLFHPN) are cytoplasmic. A helical transmembrane segment spans residues 219-239 (AYLRNGWNLLDFIIVVVGLFS). The Extracellular segment spans residues 240 to 262 (AILEQATKADGANALGGKGAGFD). Residues 263–281 (VKALRAFRVLRPLRLVSGV) form a helical membrane-spanning segment. The Cytoplasmic segment spans residues 282-298 (PSLQVVLNSIIKAMVPL). The chain crosses the membrane as a helical span at residues 299–320 (LHIALLVLFVIIIYAIIGLELF). At 321–380 (MGKMHKTCYNQEGIIDVPAEEDPSPCALETGHGRQCQNGTVCKPGWDGPKHGITNFDNFA) the chain is on the extracellular side. 2 disulfides stabilise this stretch: Cys-328–Cys-356 and Cys-346–Cys-362. An N-linked (GlcNAc...) asparagine glycan is attached at Asn-358. The segment at residues 381 to 402 (FAMLTVFQCITMEGWTDVLYWM) is an intramembrane region (pore-forming). Positions 391–394 (TMEG) match the Selectivity filter of repeat I motif. Glu-393 lines the Ca(2+) pocket. Residues 403–410 (QDAMGYEL) are Extracellular-facing. A helical membrane pass occupies residues 411 to 431 (PWVYFVSLVIFGSFFVLNLVL). The Cytoplasmic segment spans residues 432 to 554 (GVLSGEFSKE…RKCRAAVKSN (123 aa)). The AID/alpha-interaction domain; mediates interaction with the beta subunit stretch occupies residues 458–475 (QQLEEDLKGYLDWITQAE). Residues 479-511 (PENEDEGMDEDKPRNMSMPTSETESVNTENVAG) form a disordered region. Residues 495 to 508 (SMPTSETESVNTEN) are compositionally biased toward polar residues. At Ser-499 the chain carries Phosphoserine. Thr-506 is modified (phosphothreonine). Residues 540-786 (NRFCRRKCRA…LFLAIAVDNL (247 aa)) form an II repeat. The helical transmembrane segment at 555–573 (VFYWLVIFLVFLNTLTIAS) threads the bilayer. The Extracellular portion of the chain corresponds to 574–584 (EHYNQPHWLTE). The helical transmembrane segment at 585-605 (VQDTANKALLALFTAEMLLKM) threads the bilayer. At 606 to 616 (YSLGLQAYFVS) the chain is on the cytoplasmic side. The helical transmembrane segment at 617–636 (LFNRFDCFIVCGGILETILV) threads the bilayer. Residues 637–645 (ETKIMSPLG) lie on the Extracellular side of the membrane. The chain crosses the membrane as a helical span at residues 646-664 (ISCWRCVRLLRIFKITRYW). Topologically, residues 665–683 (NSLSNLVASLLNSLRSIAS) are cytoplasmic. Residues 684-703 (LLLLLFLFIIIFSLLGMQLF) form a helical membrane-spanning segment. Residues 704-723 (GGKFNFDEMQTRRSTFDNFP) lie on the Extracellular side of the membrane. Residues 724 to 745 (QSLLTVFQILTGEDWNSVMYDG) constitute an intramembrane region (pore-forming). The Selectivity filter of repeat II signature appears at 734–737 (TGED). Ca(2+) is bound at residue Glu-736. The Extracellular portion of the chain corresponds to 746-755 (IMAYGGPSFP). A helical transmembrane segment spans residues 756–775 (GMLVCIYFIILFISPNYILL). At 776–930 (NLFLAIAVDN…LQCHRIVNDT (155 aa)) the chain is on the cytoplasmic side. Residues 794–891 (SAQKEEEEEK…EMPVGPRPRP (98 aa)) form a disordered region. A compositionally biased stretch (basic and acidic residues) spans 813–836 (SPEKKQEVMEKPAVEESKEEKIEL). A phosphoserine mark is found at Ser-838 and Ser-845. The interval 859–906 (SENEDKSPHSNPDTAGEEDEEEPEMPVGPRPRPLSELHLKEKAVPMPE) is interaction with STAC2. Acidic residues predominate over residues 873 to 882 (AGEEDEEEPE). The stretch at 917–1198 (NRFRLQCHRI…IFVGFVIVTF (282 aa)) is one III repeat. A helical transmembrane segment spans residues 931–949 (IFTNLILFFILLSSISLAA). Residues 950-961 (EDPVQHTSFRNH) lie on the Extracellular side of the membrane. A helical membrane pass occupies residues 962-981 (ILFYFDIVFTTIFTIEIALK). The Cytoplasmic portion of the chain corresponds to 982-997 (MTAYGAFLHKGSFCRN). The helical transmembrane segment at 998-1016 (YFNILDLLVVSVSLISFGI) threads the bilayer. At 1017 to 1023 (QSSAINV) the chain is on the extracellular side. The chain crosses the membrane as a helical span at residues 1024-1041 (VKILRVLRVLRPLRINRA). Residues 1042–1060 (KGLKHVVQCVFVAIRTIGN) lie on the Cytoplasmic side of the membrane. Residues 1061 to 1080 (IVIVTTLLQFMFACIGVQLF) traverse the membrane as a helical segment. The Extracellular segment spans residues 1081–1130 (KGKLYTCSDSSKQTEAESKGNYITYKTGEVDHPIIQPRSWENSKFDFDNV). Positions 1118–1207 (RSWENSKFDF…FQEQGEQEYK (90 aa)) are dihydropyridine binding. Positions 1131–1151 (LAAMMALFTVSTFEGWPELLY) form an intramembrane region, pore-forming. The short motif at 1142-1145 (TFEG) is the Selectivity filter of repeat III element. Glu-1144 serves as a coordination point for Ca(2+). The Extracellular portion of the chain corresponds to 1152–1168 (RSIDSHTEDKGPIYNYR). A helical membrane pass occupies residues 1169-1190 (VEISIFFIIYIIIIAFFMMNIF). The Cytoplasmic portion of the chain corresponds to 1191-1248 (VGFVIVTFQEQGEQEYKNCELDKNQRQCVEYALKARPLPRYIPKNQHQYKVWYVVNST). An IV repeat occupies 1235–1508 (NQHQYKVWYV…LFVAVIMDNF (274 aa)). Residues 1249 to 1270 (YFEYLMFVLILLNTICLAMQHY) traverse the membrane as a helical segment. The Extracellular segment spans residues 1271–1278 (GQSCLFKI). A helical transmembrane segment spans residues 1279–1300 (AMNILNMLFTGLFTVEMILKLI). At 1301–1310 (AFKPKHYFCD) the chain is on the cytoplasmic side. The helical transmembrane segment at 1311 to 1330 (AWNTFDALIVVGSIVDIAIT) threads the bilayer. Residues 1331-1353 (EVHPAEHTQCSPSMSAEENSRIS) lie on the Extracellular side of the membrane. Residues 1354 to 1372 (ITFFRLFRVMRLVKLLSRG) form a helical membrane-spanning segment. Over 1373-1390 (EGIRTLLWTFIKSFQALP) the chain is Cytoplasmic. Residues 1391 to 1411 (YVALLIVMLFFIYAVIGMQVF) traverse the membrane as a helical segment. Residues 1412–1433 (GKIALNDTTEINRNNNFQTFPQ) lie on the Extracellular side of the membrane. Asn-1417 carries N-linked (GlcNAc...) asparagine glycosylation. Positions 1434 to 1452 (AVLLLFRCATGEAWQDIML) form an intramembrane region, pore-forming. The Selectivity filter of repeat IV signature appears at 1443–1446 (TGEA). Residues 1453 to 1480 (ACMPGKKCAPESEPSNSTEGETPCGSSF) lie on the Extracellular side of the membrane. The dihydropyridine binding stretch occupies residues 1459–1527 (KCAPESEPSN…LGPHHLDEFK (69 aa)). An intrachain disulfide couples Cys-1460 to Cys-1476. Asn-1468 is a glycosylation site (N-linked (GlcNAc...) asparagine). The tract at residues 1473–1515 (ETPCGSSFAVFYFISFYMLCAFLIINLFVAVIMDNFDYLTRDW) is phenylalkylamine binding. A helical transmembrane segment spans residues 1481-1505 (AVFYFISFYMLCAFLIINLFVAVIM). At 1506-2169 (DNFDYLTRDW…PDSRSYVSNL (664 aa)) the chain is on the cytoplasmic side. The tract at residues 1640–1667 (DEVTVGKFYATFLIQEYFRKFKKRKEQG) is important for interaction with STAC1, STAC2 and STAC3. Residues 1640-1673 (DEVTVGKFYATFLIQEYFRKFKKRKEQGLVGKPS) form a calmodulin-binding region. The segment at 1646–1666 (KFYATFLIQEYFRKFKKRKEQ) is calmodulin-binding IQ region. Residues 1680–1699 (LQAGLRTLHDIGPEIRRAIS) are important for localization in at the junctional membrane. Residues Ser-1699 and Ser-1720 each carry the phosphoserine modification. Composition is skewed to polar residues over residues 1761–1770 (KTGNNQADTE) and 1780–1792 (STFT…STGS). Residues 1761–1793 (KTGNNQADTESPSHEKLVDSTFTPSSYSSTGSN) form a disordered region. Ser-1927 carries the post-translational modification Phosphoserine; by PKA. A disordered region spans residues 1970 to 1998 (RSHSPSTFPRPRPTPPVTPGSRGRPLQPI). Over residues 1977–1987 (FPRPRPTPPVT) the composition is skewed to pro residues.

The protein belongs to the calcium channel alpha-1 subunit (TC 1.A.1.11) family. CACNA1C subfamily. Component of a calcium channel complex consisting of a pore-forming alpha subunit (CACNA1C) and ancillary beta, gamma and delta subunits. The channel complex contains alpha, beta, gamma and delta subunits in a 1:1:1:1 ratio, i.e. it contains only one of each type of subunit. CACNA1C channel activity is modulated by ancillary subunits, such as CACNB1, CACNB2, CACNB3, CACNA2D1 and CACNA2D4. Interacts with the gamma subunits CACNG4, CACNG6, CACNG7 and CACNG8. Interacts with CACNB1. Interacts with CACNB2. Identified in a complex with CACNA2D4 and CACNB3. Interacts with CACNB3. Interacts with CACNA2D1. Interacts with CACNA2D4. Interacts with CALM1. Interacts (via the N-terminus and the C-terminal C and IQ motifs) with CABP1; this inhibits Ca(2+)-dependent channel inactivation. The binding via the C motif is calcium independent whereas the binding via IQ requires the presence of calcium and is mutually exclusive with calmodulin binding. The binding to the cytoplasmic N-terminal domain is calcium independent but is essential for the channel modulation. Interacts (via C-terminal CDB motif) with CABP5; in a calcium-dependent manner. Interacts with CIB1; the interaction increases upon cardiomyocytes hypertrophy. Interacts with STAC2 and STAC3; this inhibits channel inactivation. Post-translationally, phosphorylation by PKA at Ser-1927 activates the channel. Elevated levels of blood glucose lead to increased phosphorylation by PKA. Is also phosphorylated in vitro by CaM-kinase II, PKC and CGPK. Detected in hippocampus and brain cortex, on neuronal cell bodies and dendrites, and in post-synaptic density in brain (at protein level). Isoforms 4 and 5 are expressed throughout the central nervous system, with highest levels in the olfactory bulb and cerebellum. Also expressed in heart, pituitary, adrenal gland, liver, kidney, and in a much lesser extent in testes and spleen.

Its subcellular location is the cell membrane. It is found in the sarcolemma. The protein resides in the perikaryon. It localises to the postsynaptic density membrane. The protein localises to the cell projection. Its subcellular location is the dendrite. It is found in the T-tubule. The enzyme catalyses Ca(2+)(in) = Ca(2+)(out). With respect to regulation, inhibited by dihydropyridines (DHP), such as isradipine. Inhibited by nifedipine. Channel activity is regulated by Ca(2+) and calmodulin. Binding of STAC1, STAC2 or STAC3 to a region that overlaps with the calmodulin binding site inhibits channel inactivation by Ca(2+) and calmodulin. Binding of calmodulin or CABP1 at the same regulatory sites results in opposite effects on the channel function. Shear stress and pressure increases calcium channel activity. Pore-forming, alpha-1C subunit of the voltage-gated calcium channel that gives rise to L-type calcium currents. Mediates influx of calcium ions into the cytoplasm, and thereby triggers calcium release from the sarcoplasm. Plays an important role in excitation-contraction coupling in the heart. Required for normal heart development and normal regulation of heart rhythm. Required for normal contraction of smooth muscle cells in blood vessels and in the intestine. Essential for normal blood pressure regulation via its role in the contraction of arterial smooth muscle cells. Long-lasting (L-type) calcium channels belong to the 'high-voltage activated' (HVA) group. The polypeptide is Voltage-dependent L-type calcium channel subunit alpha-1C (Cacna1c) (Rattus norvegicus (Rat)).